The sequence spans 343 residues: Ribosomal RNA small subunit methyltransferase H (343 aa).

Residues 39–41 (AGH), D58, F87, D108, and Q115 each bind S-adenosyl-L-methionine.

The protein belongs to the methyltransferase superfamily. RsmH family.

It is found in the cytoplasm. It catalyses the reaction cytidine(1402) in 16S rRNA + S-adenosyl-L-methionine = N(4)-methylcytidine(1402) in 16S rRNA + S-adenosyl-L-homocysteine + H(+). Specifically methylates the N4 position of cytidine in position 1402 (C1402) of 16S rRNA. The sequence is that of Ribosomal RNA small subunit methyltransferase H from Bifidobacterium adolescentis (strain ATCC 15703 / DSM 20083 / NCTC 11814 / E194a).